Reading from the N-terminus, the 595-residue chain is RuBisCO large subunit-binding protein subunit beta, chloroplastic (595 aa).

Residues 1–49 (MASTFSATTSSCNLSSSAAISSFPLAAGKRNANKVVLPRKNRNVKVSAM) constitute a chloroplast transit peptide.

The protein belongs to the chaperonin (HSP60) family. As to quaternary structure, oligomer of probably six alpha and six beta subunits.

It is found in the plastid. The protein localises to the chloroplast. Its function is as follows. This protein binds RuBisCO small and large subunits and is implicated in the assembly of the enzyme oligomer. In Pisum sativum (Garden pea), this protein is RuBisCO large subunit-binding protein subunit beta, chloroplastic.